Here is a 339-residue protein sequence, read N- to C-terminus: MKPYPIDLVSVVIPVYNEEASLPELLRRTEAACRSLGRAFEIVLVDDGSRDRSAELLQAAAERDGCAVVAVILNRNYGQHAAILAGFEQSRGDLVITLDADLQNPPEEIPRLVERAAQGYDVVGSIRDNRRDSAWRRWPSRLVNLAVQRSTGVAMHDYGCMLRAYRRSIVEAMLACRERSTFIPILANGFARHTCEIRVAHAERAHGESKYSAMRLLNLMFDLVTCMTTTPLRLLSLVGGGMALAGFLFALFLLVLRLAFGAAWAGNGLFVLFAVLFMFSGVQLLGMGLLGEYLGRMYSDVRARPRFFIERVVRAAPSALPSALQRAGFTSSSSEPSTP.

The next 2 membrane-spanning stretches (helical) occupy residues 235 to 255 (LSLV…FLLV) and 269 to 289 (LFVL…GMGL).

The protein belongs to the glycosyltransferase 2 family.

The protein localises to the cell inner membrane. The enzyme catalyses UDP-4-deoxy-4-formamido-beta-L-arabinose + di-trans,octa-cis-undecaprenyl phosphate = 4-deoxy-4-formamido-alpha-L-arabinopyranosyl di-trans,octa-cis-undecaprenyl phosphate + UDP. It functions in the pathway glycolipid biosynthesis; 4-amino-4-deoxy-alpha-L-arabinose undecaprenyl phosphate biosynthesis; 4-amino-4-deoxy-alpha-L-arabinose undecaprenyl phosphate from UDP-4-deoxy-4-formamido-beta-L-arabinose and undecaprenyl phosphate: step 1/2. It participates in bacterial outer membrane biogenesis; lipopolysaccharide biosynthesis. Catalyzes the transfer of 4-deoxy-4-formamido-L-arabinose from UDP to undecaprenyl phosphate. The modified arabinose is attached to lipid A and is required for resistance to polymyxin and cationic antimicrobial peptides. The chain is Undecaprenyl-phosphate 4-deoxy-4-formamido-L-arabinose transferase from Pseudomonas paraeruginosa (strain DSM 24068 / PA7) (Pseudomonas aeruginosa (strain PA7)).